We begin with the raw amino-acid sequence, 271 residues long: 3-methyl-2-oxobutanoate hydroxymethyltransferase 2 (271 aa).

Mg(2+) contacts are provided by Asp-53 and Asp-92. 3-methyl-2-oxobutanoate contacts are provided by residues 53–54 (DS), Asp-92, and Lys-120. Glu-122 serves as a coordination point for Mg(2+). The active-site Proton acceptor is Glu-189.

This sequence belongs to the PanB family. As to quaternary structure, homodecamer; pentamer of dimers. Requires Mg(2+) as cofactor.

It is found in the cytoplasm. It carries out the reaction 3-methyl-2-oxobutanoate + (6R)-5,10-methylene-5,6,7,8-tetrahydrofolate + H2O = 2-dehydropantoate + (6S)-5,6,7,8-tetrahydrofolate. It participates in cofactor biosynthesis; (R)-pantothenate biosynthesis; (R)-pantoate from 3-methyl-2-oxobutanoate: step 1/2. Its function is as follows. Catalyzes the reversible reaction in which hydroxymethyl group from 5,10-methylenetetrahydrofolate is transferred onto alpha-ketoisovalerate to form ketopantoate. This Burkholderia lata (strain ATCC 17760 / DSM 23089 / LMG 22485 / NCIMB 9086 / R18194 / 383) protein is 3-methyl-2-oxobutanoate hydroxymethyltransferase 2.